The primary structure comprises 533 residues: GDP-fucose protein O-fucosyltransferase 4 (533 aa).

Topologically, residues methionine 1–histidine 20 are cytoplasmic. A helical; Signal-anchor for type II membrane protein membrane pass occupies residues leucine 21–alanine 37. Residues glutamate 38–histidine 533 lie on the Lumenal side of the membrane. N-linked (GlcNAc...) asparagine glycosylation is found at asparagine 148, asparagine 206, and asparagine 358. Residues cysteine 429 and cysteine 432 are joined by a disulfide bond. A glycan (N-linked (GlcNAc...) asparagine) is linked at asparagine 511.

Belongs to the glycosyltransferase 10 family.

It localises to the endoplasmic reticulum membrane. The enzyme catalyses L-threonyl-[protein] + GDP-beta-L-fucose = 3-O-(alpha-L-fucosyl)-L-threonyl-[protein] + GDP + H(+). It carries out the reaction L-seryl-[protein] + GDP-beta-L-fucose = 3-O-(alpha-L-fucosyl)-L-seryl-[protein] + GDP + H(+). Its pathway is protein modification; protein glycosylation. Protein O-fucosyltransferase that specifically catalyzes O-fucosylation of serine or threonine residues in EMI domains of target proteins. Attaches fucose through an O-glycosidic linkage. O-fucosylation of EMI domain-containing proteins may be required for facilitating protein folding and secretion. In Xenopus tropicalis (Western clawed frog), this protein is GDP-fucose protein O-fucosyltransferase 4 (fut11).